The chain runs to 511 residues: mRNA export factor (511 aa).

Residues 1–15 show a composition bias toward low complexity; sequence MATDIDMLIDLGLDL. The disordered stretch occupies residues 1 to 244; sequence MATDIDMLID…ERKAPAADTI (244 aa). A Nuclear export signal motif is present at residues 5–17; it reads IDMLIDLGLDLSD. Phosphoserine; by host is present on residues serine 16 and serine 18. Composition is skewed to acidic residues over residues 16–26 and 35–51; these read SDSDLDEDPPE and LESD…EDME. An interaction with host ALYREF region spans residues 104-112; it reads VWSRLGARR. The short motif at 110-138 is the Nuclear localization signal element; it reads ARRPSCSPEQHGGKVARLQPPPTKAQPAR. A Phosphoserine; by host modification is found at serine 114. Dimethylated arginine; by host is present on arginine 138. Positions 138–152 are RGG-box; sequence RGGRRGRRRGRGRGG. A compositionally biased stretch (basic residues) spans 139–149; that stretch reads GGRRGRRRGRG. Arginine 148 bears the Omega-N-methylarginine; by host mark. Arginine 150 is modified (dimethylated arginine; by host). The segment covering 213–232 has biased composition (pro residues); sequence APPPLMTLAIAPPPADPRAP. Zn(2+) is bound by residues cysteine 399, histidine 478, cysteine 482, and cysteine 487. A CHC2-type zinc finger spans residues 399 to 487; it reads CYLKARGLCG…HRQECSSRVC (89 aa).

The protein belongs to the HHV-1 ICP27 protein family. As to quaternary structure, interacts with host RBP1; this interaction facilitates the RNA polymerase recruitment to viral transcription sites. Interacts (via the RGG box) with host ALYREF/THOC4; this interaction recruits ALYREF to viral replication compartments and probably directs viral mRNA to the TAP/NFX1 pathway. Interacts (via the RGG box) with host SRPK1; this interaction relocalizes SRPK1 to the nucleus and seems to alter its activity. Interacts with ICP4; this interaction modulates ICP4 DNA-binding activity. Interacts with host NXF1; this interaction allows efficient export of HSV-1 early and late transcripts. Methylated within the RGG box possibly by host PRMT1. When hypomethylated, ICP27 is exported to the cytoplasm earlier and more rapidly. In terms of processing, phosphorylated.

It is found in the host cytoplasm. Its subcellular location is the host nucleus. Functionally, multifunctional regulator of the expression of viral genes that contributes to the shutoff of host protein synthesis and mediates nuclear export of viral intronless mRNAs. Early in infection, this immediate early (EI) protein mediates the inhibition of cellular splicing. This results in the accumulation of unprocessed 3'end pre-mRNAs which can't be exported from the nucleus. Cellular protein synthesis is thereby shut off early after virus infection. Later in the infection, it helps recruit cellular RNA polymerase II to viral replication sites and promotes the nuclear export of viral intronless mRNAs by interacting with mRNAs and host NXF1/TAP. ICP27 binds to NUP62 which may provide facilitated viral mRNA export and may compete with some host cell transport receptors for binding and inhibit cellular nucleocytoplasmic transport pathways. Also stimulates translation of viral transcripts. Repression of host gene expression blocks the cell cycle at the G1 phase and prevents apoptosis. Seems to silence the 3' splice site of the promyelocytic leukemia (PML) intron 7a, thereby switching PML isoforms from PML-II to PML-V. This could be linked to the accelerated mRNA export induced by ICP27 which might not provide sufficient time for PML pre-mRNA to be spliced in the nucleus. This is mRNA export factor from Human herpesvirus 1 (strain HFEM) (HHV-1).